Reading from the N-terminus, the 243-residue chain is Methylthioribulose-1-phosphate dehydratase (243 aa).

The interval 1-22 (MCPADQTVATNNNDHLVQSEDP) is disordered. Residues 7–16 (TVATNNNDHL) are compositionally biased toward polar residues. C103 contacts substrate. Zn(2+) is bound by residues H120 and H122. The active-site Proton donor/acceptor is the E149. Residue H205 participates in Zn(2+) binding.

It belongs to the aldolase class II family. MtnB subfamily. It depends on Zn(2+) as a cofactor.

It is found in the cytoplasm. The enzyme catalyses 5-(methylsulfanyl)-D-ribulose 1-phosphate = 5-methylsulfanyl-2,3-dioxopentyl phosphate + H2O. The protein operates within amino-acid biosynthesis; L-methionine biosynthesis via salvage pathway; L-methionine from S-methyl-5-thio-alpha-D-ribose 1-phosphate: step 2/6. Its function is as follows. Catalyzes the dehydration of methylthioribulose-1-phosphate (MTRu-1-P) into 2,3-diketo-5-methylthiopentyl-1-phosphate (DK-MTP-1-P). The protein is Methylthioribulose-1-phosphate dehydratase of Penicillium rubens (strain ATCC 28089 / DSM 1075 / NRRL 1951 / Wisconsin 54-1255) (Penicillium chrysogenum).